A 446-amino-acid polypeptide reads, in one-letter code: Maltoporin (446 aa).

Residues 1–25 (MMITLRKLPLAVAVAAGVMSAQAMA) form the signal peptide.

The protein belongs to the porin LamB (TC 1.B.3) family. Homotrimer formed of three 18-stranded antiparallel beta-barrels, containing three independent channels.

The protein localises to the cell outer membrane. The enzyme catalyses beta-maltose(in) = beta-maltose(out). Its function is as follows. Involved in the transport of maltose and maltodextrins. The protein is Maltoporin of Escherichia coli O7:K1 (strain IAI39 / ExPEC).